The sequence spans 309 residues: Golgi to ER traffic protein 4 homolog (309 aa).

The segment at 290–309 (SGGGLASMEVDGPTIEDEMD) is disordered.

Belongs to the GET4 family.

May play a role in insertion of tail-anchored proteins into the endoplasmic reticulum membrane. The sequence is that of Golgi to ER traffic protein 4 homolog from Dictyostelium discoideum (Social amoeba).